A 255-amino-acid polypeptide reads, in one-letter code: Type III pantothenate kinase (255 aa).

Position 7 to 14 (7 to 14 (DVGNTRLK)) interacts with ATP. Substrate-binding positions include Y96 and 103–106 (GADR). Catalysis depends on D105, which acts as the Proton acceptor. Position 133 (T133) interacts with ATP. Residue T183 participates in substrate binding.

The protein belongs to the type III pantothenate kinase family. Homodimer. Requires NH4(+) as cofactor. The cofactor is K(+).

It localises to the cytoplasm. It catalyses the reaction (R)-pantothenate + ATP = (R)-4'-phosphopantothenate + ADP + H(+). The protein operates within cofactor biosynthesis; coenzyme A biosynthesis; CoA from (R)-pantothenate: step 1/5. Functionally, catalyzes the phosphorylation of pantothenate (Pan), the first step in CoA biosynthesis. This Polaromonas sp. (strain JS666 / ATCC BAA-500) protein is Type III pantothenate kinase.